We begin with the raw amino-acid sequence, 307 residues long: NAD kinase (307 aa).

D78 serves as the catalytic Proton acceptor. Residues 78 to 79 (DG), H83, 154 to 155 (NE), R165, R182, D184, and Q255 contribute to the NAD(+) site.

It belongs to the NAD kinase family. A divalent metal cation is required as a cofactor.

It localises to the cytoplasm. The enzyme catalyses NAD(+) + ATP = ADP + NADP(+) + H(+). Involved in the regulation of the intracellular balance of NAD and NADP, and is a key enzyme in the biosynthesis of NADP. Catalyzes specifically the phosphorylation on 2'-hydroxyl of the adenosine moiety of NAD to yield NADP. The chain is NAD kinase from Halorhodospira halophila (strain DSM 244 / SL1) (Ectothiorhodospira halophila (strain DSM 244 / SL1)).